Consider the following 358-residue polypeptide: Cyclin-D1-binding protein 1 (358 aa).

Interaction with TCF3 regions lie at residues 1-183 (MESA…VDLV) and 149-358 (ISYN…EVES). Interaction with RPLP0 stretches follow at residues 1–189 (MESA…AHEE) and 238–358 (LIIP…EVES). Residues 1-207 (MESAAVSAAP…DPYCGLLNDI (207 aa)) form a required for interaction with CCND1 region.

It belongs to the CCNDBP1 family. As to quaternary structure, interacts with CCND1 and GRAP2. May also interact with COPS5, RPLP0, SIRT6, SYF2 and TCF3. Post-translationally, phosphorylated.

Its subcellular location is the cytoplasm. It localises to the nucleus. May negatively regulate cell cycle progression. May act at least in part via inhibition of the cyclin-D1/CDK4 complex, thereby preventing phosphorylation of RB1 and blocking E2F-dependent transcription. The polypeptide is Cyclin-D1-binding protein 1 (CCNDBP1) (Bos taurus (Bovine)).